Consider the following 526-residue polypeptide: ATP synthase subunit alpha (526 aa).

171–178 (GDRQTGKT) lines the ATP pocket.

This sequence belongs to the ATPase alpha/beta chains family. As to quaternary structure, F-type ATPases have 2 components, CF(1) - the catalytic core - and CF(0) - the membrane proton channel. CF(1) has five subunits: alpha(3), beta(3), gamma(1), delta(1), epsilon(1). CF(0) has three main subunits: a(1), b(2) and c(9-12). The alpha and beta chains form an alternating ring which encloses part of the gamma chain. CF(1) is attached to CF(0) by a central stalk formed by the gamma and epsilon chains, while a peripheral stalk is formed by the delta and b chains.

Its subcellular location is the cell inner membrane. It catalyses the reaction ATP + H2O + 4 H(+)(in) = ADP + phosphate + 5 H(+)(out). Produces ATP from ADP in the presence of a proton gradient across the membrane. The alpha chain is a regulatory subunit. This is ATP synthase subunit alpha from Cytophaga hutchinsonii (strain ATCC 33406 / DSM 1761 / CIP 103989 / NBRC 15051 / NCIMB 9469 / D465).